Consider the following 99-residue polypeptide: MAKGQSLQDPFLNALRRERVPVSIYLVNGIKLQGQIESFDQFVILLKNTVSQMVYKHAISTVVPSRPVSHHSNNPGGSNNYHGSNTTAQQQSQDADDAE.

The Sm domain maps to 9 to 68 (DPFLNALRRERVPVSIYLVNGIKLQGQIESFDQFVILLKNTVSQMVYKHAISTVVPSRPV). The segment at 64–99 (PSRPVSHHSNNPGGSNNYHGSNTTAQQQSQDADDAE) is disordered. The span at 70–93 (HHSNNPGGSNNYHGSNTTAQQQSQ) shows a compositional bias: low complexity.

It belongs to the Hfq family. Homohexamer.

RNA chaperone that binds small regulatory RNA (sRNAs) and mRNAs to facilitate mRNA translational regulation in response to envelope stress, environmental stress and changes in metabolite concentrations. Also binds with high specificity to tRNAs. The sequence is that of RNA-binding protein Hfq from Pectobacterium atrosepticum (strain SCRI 1043 / ATCC BAA-672) (Erwinia carotovora subsp. atroseptica).